The primary structure comprises 820 residues: MVRSRSNSVKKDLKRKVDEPVDVQDEFDVEGLIDEGDSDDEDEAEQEVAQENVTKDKKNTSKTENEEDADDESDSDAELEALIGEEEDLSGSELEDELAYFSDAGDDEVDPSILKHLDDGVRLRSLSRSSDQTDELKDVVEIVPGADGKPRMIKKEIHAVYDSDDSDQEESNTIGNVPLSAYDQMPHIGYDINGKRIMRPATGSALDNLLETIDLPEGWTGLLDKSTGKGLNISKEELELIKRIQKNETTDDASNPYEDLVEWFSSKTEIMPLSAAPEPKRRFIPSKHEAKRVMKMVQAIRQGKLLTKPKEDPDARPNYDVWADNLTDVQDHVMTLRAPKMPPPTHDESYNPPAEYLPTEEEIAEWNALAPSERERNYVPKKYTALRHVPGYSESVRERFERSLDLYLAPRVRKNKLNIDPDSLIPDLPSPKDLMPFPIRCATTYKGHKGKVRAISVDPSGEFLATGGDDGTLRVWEVLTGRELYRCRLVASIDAQDDSVECVQWNPAVPGMLAASAGEHIFLIVPPTLFDFDIENTGREKIEQGWGFAEGGREQQDIDTKGLDDDADSDSDDETGHVKKKSPPAKWITPTAKQQASGIGAIITATKTIKRLAWHRKGDYLVTVAPSAQHRAVAIHQISKHSSQSPFNKSKGIVQDAMFHPFRPHLYVATQRYVRIYDLAKQVMAKKLMPGARWVSSLDIHPRGDNVILSSFDKRLLWHDLDLSDKPYKTLRYHEKAVRHAAFHKGGLPLFCSASDDGNINIFHGTVYDDMMTNPLLVPLKVLKGHDVKSGLGILRVEWHPREAWLFSAAADGTAKLWTT.

The tract at residues 1–111 is disordered; it reads MVRSRSNSVK…SDAGDDEVDP (111 aa). Residues 9 to 19 are compositionally biased toward basic and acidic residues; that stretch reads VKKDLKRKVDE. Residues 20 to 48 are compositionally biased toward acidic residues; that stretch reads PVDVQDEFDVEGLIDEGDSDDEDEAEQEV. Residues 53 to 64 show a composition bias toward basic and acidic residues; it reads VTKDKKNTSKTE. Residues 65-110 show a composition bias toward acidic residues; that stretch reads NEEDADDESDSDAELEALIGEEEDLSGSELEDELAYFSDAGDDEVD. Positions 282 to 395 are required for interaction with NOP7; sequence RFIPSKHEAK…LRHVPGYSES (114 aa). A required for interaction with YTM1 region spans residues 395-431; sequence SVRERFERSLDLYLAPRVRKNKLNIDPDSLIPDLPSP. WD repeat units lie at residues 447-486 and 495-535; these read GHKG…ELYR and AQDD…FDIE. The interval 545–585 is disordered; the sequence is GWGFAEGGREQQDIDTKGLDDDADSDSDDETGHVKKKSPPA. Positions 551–564 are enriched in basic and acidic residues; sequence GGREQQDIDTKGLD. 5 WD repeats span residues 604 to 646, 649 to 687, 690 to 729, 733 to 773, and 789 to 820; these read TATK…SQSP, KSKG…MAKK, PGAR…KPYK, YHEK…DMMT, and KSGL…LWTT.

The protein belongs to the WD repeat BOP1/ERB1 family. As to quaternary structure, component of the NOP7 complex, composed of ERB1, NOP7 and YTM1. The complex is held together by ERB1, which interacts with NOP7 via its N-terminal domain and with YTM1 via a high-affinity interaction between the seven-bladed beta-propeller domains of the 2 proteins. The NOP7 complex associates with the 66S pre-ribosome.

The protein localises to the nucleus. The protein resides in the nucleolus. Its subcellular location is the nucleoplasm. Component of the NOP7 complex, which is required for maturation of the 25S and 5.8S ribosomal RNAs and formation of the 60S ribosome. The chain is Ribosome biogenesis protein ERB1 from Yarrowia lipolytica (strain CLIB 122 / E 150) (Yeast).